Here is a 635-residue protein sequence, read N- to C-terminus: Threonine--tRNA ligase (635 aa).

Residues 1–61 (MVSIRLPDGS…DRDASLAIVT (61 aa)) enclose the TGS domain. The segment at 242 to 533 (DHRKLGKQLD…LIEHHAGAMP (292 aa)) is catalytic. Zn(2+) is bound by residues C333, H384, and H510.

The protein belongs to the class-II aminoacyl-tRNA synthetase family. In terms of assembly, homodimer. Requires Zn(2+) as cofactor.

The protein resides in the cytoplasm. It carries out the reaction tRNA(Thr) + L-threonine + ATP = L-threonyl-tRNA(Thr) + AMP + diphosphate + H(+). Its function is as follows. Catalyzes the attachment of threonine to tRNA(Thr) in a two-step reaction: L-threonine is first activated by ATP to form Thr-AMP and then transferred to the acceptor end of tRNA(Thr). Also edits incorrectly charged L-seryl-tRNA(Thr). The protein is Threonine--tRNA ligase of Burkholderia orbicola (strain MC0-3).